The primary structure comprises 816 residues: Neuronal PAS domain-containing protein 2 (816 aa).

Positions methionine 1 to lysine 10 are enriched in basic and acidic residues. A disordered region spans residues methionine 1 to arginine 21. A sufficient for heterodimer formation with BMAL1, E-box binding and for the effect of NADPH region spans residues methionine 1–glutamate 61. The bHLH domain maps to alanine 9–histidine 59. Residues asparagine 82 to threonine 152 enclose the PAS 1 domain. Heme b-binding residues include histidine 119 and histidine 171. Residues phenylalanine 237 to glycine 307 enclose the PAS 2 domain. The PAC domain maps to serine 311–alanine 354. Disordered regions lie at residues leucine 364–threonine 431, isoleucine 610–serine 639, glutamine 685–arginine 705, and proline 742–serine 816. Residues serine 400–arginine 413 are compositionally biased toward low complexity. Polar residues predominate over residues histidine 420–threonine 431. The span at leucine 623–serine 639 shows a compositional bias: low complexity. The segment covering proline 745–glutamine 759 has biased composition (low complexity). The span at leucine 780 to glycine 789 shows a compositional bias: polar residues. Residues proline 806–serine 816 are compositionally biased toward basic residues.

In terms of assembly, component of the circadian clock oscillator which includes the CRY proteins, CLOCK or NPAS2, BMAL1 or BMAL2, CSNK1D and/or CSNK1E, TIMELESS and the PER proteins. Efficient DNA binding requires dimerization with another bHLH protein. Interacts with NCOA3, KAT2B and CREBBP. Forms a heterodimer with BMAL1 and this heterodimerization is required for E-box-dependent transactivation. Interacts with EP300. The cofactor is heme. As to expression, expressed in the retinal ganglion cells (at protein level). Expressed in the hypothalamic suprachiasmatic nuclei (SCN) of the brain. Also found in spinal cord, and to a lesser extent in colon, small intestine and uterus. Exhibits a diurnal variation in its expression in the brain.

It localises to the nucleus. Carbon monoxide (CO) and the redox state of the cell can modulate the transcriptional activity of the NPAS2-BMAL1 heterodimer. NADH and NADPH enhance the DNA-binding activity of the heterodimer whereas CO binds the heme group in NPAS2 and inhibits the DNA-binding activity of the heterodimer. Transcriptional activator which forms a core component of the circadian clock. The circadian clock, an internal time-keeping system, regulates various physiological processes through the generation of approximately 24 hour circadian rhythms in gene expression, which are translated into rhythms in metabolism and behavior. It is derived from the Latin roots 'circa' (about) and 'diem' (day) and acts as an important regulator of a wide array of physiological functions including metabolism, sleep, body temperature, blood pressure, endocrine, immune, cardiovascular, and renal function. Consists of two major components: the central clock, residing in the suprachiasmatic nucleus (SCN) of the brain, and the peripheral clocks that are present in nearly every tissue and organ system. Both the central and peripheral clocks can be reset by environmental cues, also known as Zeitgebers (German for 'timegivers'). The predominant Zeitgeber for the central clock is light, which is sensed by retina and signals directly to the SCN. The central clock entrains the peripheral clocks through neuronal and hormonal signals, body temperature and feeding-related cues, aligning all clocks with the external light/dark cycle. Circadian rhythms allow an organism to achieve temporal homeostasis with its environment at the molecular level by regulating gene expression to create a peak of protein expression once every 24 hours to control when a particular physiological process is most active with respect to the solar day. Transcription and translation of core clock components (CLOCK, NPAS2, BMAL1, BMAL2, PER1, PER2, PER3, CRY1 and CRY2) plays a critical role in rhythm generation, whereas delays imposed by post-translational modifications (PTMs) are important for determining the period (tau) of the rhythms (tau refers to the period of a rhythm and is the length, in time, of one complete cycle). A diurnal rhythm is synchronized with the day/night cycle, while the ultradian and infradian rhythms have a period shorter and longer than 24 hours, respectively. Disruptions in the circadian rhythms contribute to the pathology of cardiovascular diseases, cancer, metabolic syndromes and aging. A transcription/translation feedback loop (TTFL) forms the core of the molecular circadian clock mechanism. Transcription factors, CLOCK or NPAS2 and BMAL1 or BMAL2, form the positive limb of the feedback loop, act in the form of a heterodimer and activate the transcription of core clock genes and clock-controlled genes (involved in key metabolic processes), harboring E-box elements (5'-CACGTG-3') within their promoters. The core clock genes: PER1/2/3 and CRY1/2 which are transcriptional repressors form the negative limb of the feedback loop and interact with the CLOCK|NPAS2-BMAL1|BMAL2 heterodimer inhibiting its activity and thereby negatively regulating their own expression. This heterodimer also activates nuclear receptors NR1D1/2 and RORA/B/G, which form a second feedback loop and which activate and repress BMAL1 transcription, respectively. The NPAS2-BMAL1 heterodimer positively regulates the expression of MAOA, F7 and LDHA and modulates the circadian rhythm of daytime contrast sensitivity by regulating the rhythmic expression of adenylate cyclase type 1 (ADCY1) in the retina. NPAS2 plays an important role in sleep homeostasis and in maintaining circadian behaviors in normal light/dark and feeding conditions and in the effective synchronization of feeding behavior with scheduled food availability. Regulates the gene transcription of key metabolic pathways in the liver and is involved in DNA damage response by regulating several cell cycle and DNA repair genes. Controls the circadian rhythm of NR0B2 expression by binding rhythmically to its promoter. Mediates the diurnal variation in the expression of GABARA1 receptor in the brain and contributes to the regulation of anxiety-like behaviors and GABAergic neurotransmission in the ventral striatum. This is Neuronal PAS domain-containing protein 2 (Npas2) from Mus musculus (Mouse).